Reading from the N-terminus, the 223-residue chain is Ubiquitin carboxyl-terminal hydrolase isozyme L1 (223 aa).

Residue M1 is modified to N-acetylmethionine. Residues 2 to 221 form the UCH catalytic domain; it reads QLKPMEINPE…VRFSAVALCK (220 aa). Residues 5–10 form an interaction with ubiquitin region; sequence PMEINP. C90 serves as the catalytic Nucleophile. A Phosphoserine modification is found at S125. Catalysis depends on H161, which acts as the Proton donor. The tract at residues 211 to 216 is interaction with ubiquitin; that stretch reads EVRFSA. Residue C220 is the site of S-farnesyl cysteine attachment. Residues 221-223 constitute a propeptide, removed in mature form; that stretch reads KAA.

Belongs to the peptidase C12 family. Monomer. Homodimer. Interacts with COPS5 and SNCA. Post-translationally, O-glycosylated. In terms of tissue distribution, expressed in brain, where it is found in neurons but not in oligodendrocytes or astrocytes. Found in the ganglion cell layer and the inner nuclear layer of the retina (at protein level). Expressed in brain and testis. In the brain, expression is at its lowest in replaceable neurons of hippocampus and olfactory bulb. Highly expressed in senescent pituitary. In skeletal muscle, primarily expressed in oxidative muscle fibers.

It localises to the cytoplasm. The protein localises to the endoplasmic reticulum membrane. It catalyses the reaction Thiol-dependent hydrolysis of ester, thioester, amide, peptide and isopeptide bonds formed by the C-terminal Gly of ubiquitin (a 76-residue protein attached to proteins as an intracellular targeting signal).. Its function is as follows. Deubiquitinase that plays a role in the regulation of several processes such as maintenance of synaptic function, cardiac function, inflammatory response or osteoclastogenesis. Abrogates the ubiquitination of multiple proteins including WWTR1/TAZ, EGFR, HIF1A and beta-site amyloid precursor protein cleaving enzyme 1/BACE1. In addition, recognizes and hydrolyzes a peptide bond at the C-terminal glycine of ubiquitin to maintain a stable pool of monoubiquitin that is a key requirement for the ubiquitin-proteasome and the autophagy-lysosome pathways. Regulates amyloid precursor protein/APP processing by promoting BACE1 degradation resulting in decreased amyloid beta production. Plays a role in the immune response by regulating the ability of MHC I molecules to reach cross-presentation compartments competent for generating Ag-MHC I complexes. Mediates the 'Lys-48'-linked deubiquitination of the transcriptional coactivator WWTR1/TAZ leading to its stabilization and inhibition of osteoclastogenesis. Deubiquitinates and stabilizes epidermal growth factor receptor EGFR to prevent its degradation and to activate its downstream mediators. Modulates oxidative activity in skeletal muscle by regulating key mitochondrial oxidative proteins. Enhances the activity of hypoxia-inducible factor 1-alpha/HIF1A by abrogateing its VHL E3 ligase-mediated ubiquitination and consequently inhibiting its degradation. This Mus musculus (Mouse) protein is Ubiquitin carboxyl-terminal hydrolase isozyme L1 (Uchl1).